Consider the following 519-residue polypeptide: Circadian clock oscillator protein KaiC (519 aa).

The 247-residue stretch at 1-247 folds into the KaiC 1 domain; that stretch reads MTSAEMTSPN…TITDHGINIF (247 aa). Glycine 49, threonine 50, glycine 51, lysine 52, threonine 53, and leucine 54 together coordinate ATP. Threonine 53 lines the Mg(2+) pocket. Glutamate 77 serves as the catalytic Proton acceptor in CI (KaiC 1). Serine 89 lines the ATP pocket. A B-loop, required to bind KaiB and SasA region spans residues 115-122; the sequence is QEVVGGFD. Lysine 224, leucine 225, arginine 226, threonine 228, histidine 230, threonine 240, and aspartate 241 together coordinate ATP. A linker region spans residues 248 to 260; it reads PLGAMRLTQRSSN. A KaiC 2 domain is found at 261 to 519; the sequence is VRVSSGVVRL…RGVQEKGPES (259 aa). Positions 290, 291, 292, 293, 294, 295, and 296 each coordinate ATP. Threonine 295 contacts Mg(2+). Residue glutamate 318 coordinates Mg(2+). The active-site Proton acceptor in CII (KaiC 2) is the glutamate 318. Residue tryptophan 331 participates in ATP binding. Residue serine 431 is modified to Phosphoserine; by autocatalysis. Residue threonine 432 is modified to Phosphothreonine; by autocatalysis. ATP-binding residues include arginine 451, lysine 457, methionine 458, arginine 459, serine 461, histidine 463, and lysine 465. Positions 488-497 are A-loop, interacts with KaiA; that stretch reads RIISGSPTRI.

The protein belongs to the KaiC family. In terms of assembly, homohexamer resembling 2 stacked donuts with a central pore nearly blocked on one side; hexamerization is dependent on ATP-binding. Binds 12 ATP; 6 between each subunit in both layers. KaiB only binds to phospho-Ser-431 KaiC (not doubly phosphorylated KaiC). Complex formation between KaiB and KaiC is regulated by the phosphorylation state of KaiC and by an ATP hydrolysis-driven conformation change in the CI ring of KaiC; complex formation is slow. Slow complex formation is crucial for the timing of the circadian period. KaiB switches to a thioredoxin-like form called KaiB(fs) when bound to KaiC. The KaiABC complex composition changes during the circadian cycle to control KaiC phosphorylation. Complexes KaiC(6), KaiA(2-4):KaiC(6), KaiB(6):KaiC(6) and KaiC(6):KaiB(6):KaiA(12) are among the most important forms, many form cooperatively. Interacts directly with KaiB and SasA. The CI domain binds to KaiB and SasA; as they have a similar fold they compete for the same site on CI. CikA interacts with this protein in the clock complex. Binds to the C-terminus of KaiA via a coiled-coil structure. Forms KaiC(6):KaiB(1) and KaiC(6):KaiB(6) complexes. The cofactor is Mg(2+). Has a 4 step phosphorylation cycle; the autokinase acts first on Thr-432, then Ser-431. When Ser-431 is modified KaiC switches to an autophosphatase mode, acting first on phospho-Thr-432 then phospho-Ser-431. Phosphorylated and dephosphorylated on serine/threonine residues by autocatalysis. Unphosphorylated, mono- and di-phosphorylated forms exist. The phosphorylated form correlates with clock speed. The presence of KaiA increases phosphorylation and stabilizes these forms. In terms of processing, phosphorylated on serine and threonine residues by autocatalysis. Has a 4 step phosphorylation cycle; the autokinase acts first on Thr-432, then Ser-431. When Ser-431 is modified KaiC switches to an autophosphatase mode, acting first on phospho-Thr-432 then phospho-Ser-431.

The enzyme catalyses L-seryl-[protein] + ATP = O-phospho-L-seryl-[protein] + ADP + H(+). It catalyses the reaction L-threonyl-[protein] + ATP = O-phospho-L-threonyl-[protein] + ADP + H(+). It carries out the reaction ATP + H2O = ADP + phosphate + H(+). Interaction with KaiA stimulates autophosphorylation, KaiC interaction with KaiB sequesters KaiA, preventing it stimulating the KaiC kinase, leading to autodephosphorylation. A KaiA dimer is sufficient to enhance KaiC phosphorylation. Interaction of KaiA with the A-loop stimulates autokinase activity. In terms of biological role, the KaiABC oscillator complex constitutes the main circadian regulator in cyanobacteria. Complex composition changes during the circadian cycle to control KaiC phosphorylation; KaiA stimulates KaiC autophosphorylation, while KaiB sequesters KaiA, leading to KaiC autodephosphorylation. The Kai complex controls chromosome condensation, leading to a transcription accessible chromosome during the first half of the circadian cycle and a compact, less transcription-accessible chromosome during the latter half. Clock output pathways impact the RpaA transcriptional regulator. Circadian oscillations can be generated in vitro by incubating KaiA, KaiB and KaiC with 1 mM ATP. The cycle is self-sustainable for at least 3 cycles and resistant to temperature changes. Mutations in KaiC alone prolong or reduce the circadian rhythm. A very robust clock is reconstituted with KaiA, KaiB, KaiC, SasA, CikA and RpaA; output is measured by transcription from an appropriate reporter. Functionally, the level of KaiC phosphorylation and KaiC ATPase activity represent the key features of the biochemical oscillator. KaiA homodimer binding to the KaiC CII domain stimulates KaiC's ATPase activity and forms KaiA(2-4):KaiC(6) complexes, which stimulate KaiC autophosphorylation first on Thr-432 then Ser-431. Phospho-Ser-431-KaiC accumulation triggers binding of KaiB to CI to form the KaiB(6):KaiC(6) complex, leading to changes in the output regulators CikA and SasA. KaiB(6):KaiC(6) formation exposes a site for KaiA binding that sequesters KaiA from the CII domain, making the KaiC(6):KaiB(6):KaiA(12) complex that results in KaiC autodephosphorylation. Complete dephosphorylation of KaiC leads to dissociation of KaiA(2):KaiB(1), completing 1 cycle of the Kai oscillator. Has a weak, temperature-independent ATPase activity (about 15 molecules of ATP per day); the addition of KaiA and KaiB increases activity slightly and makes the activity oscillate with a circadian period in vitro for over 60 hours. ATPase activity defines the circadian period. The phosphorylation state of KaiC modulates its ATPase activity and effects KaiB binding. Its function is as follows. There are several clock output pathways; SasA/RpaA, CikA/RpaA and LabA. KaiC enhances the autophosphorylation activity of SasA, which then transfers its phosphate group to RpaA to activate it. Phosphotransfer is maximal when KaiC phosphorylation is active during the circadian cycle. KaiB and KaiC together enhance the phosphatase activity of CikA on phospho-RpaA. In terms of biological role, kaiC is important for metabolic partitioning during the dark to light shift, modulating the balance between the Calvin cycle and oxidative pentose phosphate pathway under natural growth conditions. In Synechococcus elongatus (strain ATCC 33912 / PCC 7942 / FACHB-805) (Anacystis nidulans R2), this protein is Circadian clock oscillator protein KaiC.